The following is a 211-amino-acid chain: Cytochrome c biogenesis ATP-binding export protein CcmA 2 (211 aa).

Positions 6–208 constitute an ABC transporter domain; the sequence is LEARELGVRR…GAVLDLATDA (203 aa). Position 38–45 (38–45) interacts with ATP; sequence GPNGAGKT.

Belongs to the ABC transporter superfamily. CcmA exporter (TC 3.A.1.107) family. The complex is composed of two ATP-binding proteins (CcmA) and two transmembrane proteins (CcmB).

The protein resides in the cell inner membrane. The enzyme catalyses heme b(in) + ATP + H2O = heme b(out) + ADP + phosphate + H(+). Its function is as follows. Part of the ABC transporter complex CcmAB involved in the biogenesis of c-type cytochromes; once thought to export heme, this seems not to be the case, but its exact role is uncertain. Responsible for energy coupling to the transport system. This chain is Cytochrome c biogenesis ATP-binding export protein CcmA 2, found in Cupriavidus metallidurans (strain ATCC 43123 / DSM 2839 / NBRC 102507 / CH34) (Ralstonia metallidurans).